The following is a 488-amino-acid chain: Germacrene A hydroxylase (488 aa).

The Cytoplasmic segment spans residues 1 to 6 (MELSIT). A helical; Signal-anchor for type II membrane protein transmembrane segment spans residues 7–23 (TSIALATIVFFLYKLAT). Topologically, residues 24 to 488 (RPKSTKKQLP…KTELLLVPSF (465 aa)) are lumenal. Asn169, Asn260, and Asn379 each carry an N-linked (GlcNAc...) asparagine glycan. Residue Cys432 coordinates heme.

This sequence belongs to the cytochrome P450 family. It depends on heme as a cofactor.

It is found in the endoplasmic reticulum membrane. The catalysed reaction is (+)-(R)-germacrene A + 3 reduced [NADPH--hemoprotein reductase] + 3 O2 = germacra-1(10),4,11(13)-trien-12-oate + 3 oxidized [NADPH--hemoprotein reductase] + 4 H2O + 4 H(+). It participates in secondary metabolite biosynthesis; terpenoid biosynthesis. In terms of biological role, involved in the biosynthesis of germacrene-derived sesquiterpene lactones. Catalyzes three consecutive oxidations of germacrene A to produce germacrene A acid. Could also catalyze the three-step oxidation of non-natural substrate amorphadiene to artemisinic acid. This Lactuca sativa (Garden lettuce) protein is Germacrene A hydroxylase.